A 515-amino-acid chain; its full sequence is Low affinity ammonium transporter (515 aa).

Residues 1–78 (MSTSSSVTQK…IIGNSFGTTN (78 aa)) are Extracellular-facing. A helical membrane pass occupies residues 79–99 (AGQLSWFASAYSLTVGTFILI). At 100–111 (AGRLGDIFGHKK) the chain is on the cytoplasmic side. Residues 112 to 132 (FFVLGFFWYALWSLLAGFSVY) form a helical membrane-spanning segment. Residues 133-140 (SNQIFFDC) are Extracellular-facing. Residues 141–161 (CRAFQGMGPAFLLPNAIAILG) traverse the membrane as a helical segment. Residues 162–171 (RTYKPGRRKN) are Cytoplasmic-facing. The helical transmembrane segment at 172-192 (MVFSLFGASAPGGFFLGAVFS) threads the bilayer. Over 193–202 (SMLGQLAWWP) the chain is Extracellular. A helical membrane pass occupies residues 203–223 (WAYWIMGIACFVLAVAGYFVI). The Cytoplasmic portion of the chain corresponds to 224–241 (PHTPMPSRDASSFKLLER). The helical transmembrane segment at 242 to 262 (IDFAGSVTGVVGLILFNFAWN) threads the bilayer. The Extracellular portion of the chain corresponds to 263 to 270 (QGPVVGWQ). Residues 271–291 (TPYTYALLIVGTFFLVIFAYI) traverse the membrane as a helical segment. At 292–310 (ESRAAFPLLPFAALSSDTA) the chain is on the cytoplasmic side. A helical transmembrane segment spans residues 311–331 (FVLSCIAAGWASFGIWIFYTW). Over 332 to 346 (QFMEDSRGQTPLLSS) the chain is Extracellular. A helical transmembrane segment spans residues 347–367 (AQFSPVAISGFCAAVTTGFLL). The Cytoplasmic portion of the chain corresponds to 368–374 (SHTPPST). Residues 375–395 (VMLFAMTAFTVGTILIATAPV) form a helical membrane-spanning segment. Topologically, residues 396-403 (HQTYWAQT) are extracellular. Residues 404–424 (FVSIIVMPWGMDMSFPAATIM) form a helical membrane-spanning segment. Over 425–435 (LSDSMPHEHQG) the chain is Cytoplasmic. The helical transmembrane segment at 436-456 (LAASLVNTVVNYSISIGLGIA) threads the bilayer. Residues 457 to 479 (GTIESRVNDGGAKPLKGYRCSWY) are Extracellular-facing. A helical membrane pass occupies residues 480-500 (MGIGLSGLGIFVAATYAWSTF). Topologically, residues 501–515 (MKSKKRISEKQHFIE) are cytoplasmic.

It belongs to the major facilitator superfamily.

The protein localises to the cell membrane. Functionally, low affinity ammonium transporter of the plasma membrane. May be involved in drug resistance through pumping them out of the cell. This chain is Low affinity ammonium transporter, found in Saccharomyces cerevisiae (strain ATCC 204508 / S288c) (Baker's yeast).